Here is a 109-residue protein sequence, read N- to C-terminus: Large ribosomal subunit protein uL24 (109 aa).

Belongs to the universal ribosomal protein uL24 family. Part of the 50S ribosomal subunit.

Its function is as follows. One of two assembly initiator proteins, it binds directly to the 5'-end of the 23S rRNA, where it nucleates assembly of the 50S subunit. Functionally, one of the proteins that surrounds the polypeptide exit tunnel on the outside of the subunit. The chain is Large ribosomal subunit protein uL24 from Rickettsia canadensis (strain McKiel).